Reading from the N-terminus, the 875-residue chain is MQSIPHSDEADVAGMTHASEGHHGLGTSMLVPKNPQGEEDSKLGRNCSGFEDAQDPQTAVPSSPLLSMASCSSQEGSSPCHLLTVRIIGMKNVRQADILSQTDCFVTLWLPTASQKKLKTRTISNCLHPEWDESFTFQIQTQVKNVLELSVCDEDTLTQNDHLLTVLYDLSKLCLRNKTHVKFPLNPEGMEELEVEFLLEENFSSSETLITNGVLVSRQVSCLEVHAESRRPRKRKKNKDLLVMVTDSFENTQRVPPCQEPCYPNSACFHYPKYSQPQLYAEAPKSHCNFRLCCCGTHRNDPVCQPLNCLSDGQVTTLPVGENYELHMKSSPCSDTLDVRLGFSLCQEEVEFVQKRKMVVAKTLSQMLQLEEGLHEDEVPIIAIMATGGGTRSMVSLYGHLLGLQKLNFLDASTYITGLSGATWTMATLYSDPEWSSKNLETVVFEARRHVVKDKMPALFPDQLYKWREDLQKHSQEGYKTTFTDFWGKLIEYSLGDKKNECKLSDQRAALCRGQNPLPIYLTINVKDDVSNQDFREWFEFSPYEVGMQKYGAFIPSELFGSEFFMGRLMKRIPEPEMCYMLGLWSSIFSLNLLDAWNLSHTSEEFFYRWTRERLHDIEDDPILPEIPRCDDNPLETTVVIPTTWLSNTFREILTRRPFVSEFHNFLYGMQLHTDYLQNRQFSMWKDTVLDTFPNQLTQFAKHLNLLDTAFFVNSSYAPLLRPERKVDLIIHLNYCAGSQTKPLKQTCEYCTEQKIPFPSFSILEDDNSLKECYVMENPQEPDAPIVAYFPLISDTFQKYKAPGVERSPDELELGQLNIYGPKSPYATKELTYTEAAFDKLVKLSEYNILNNRDKLIQALRLAMEKKRMRSQCPS.

The interval T16–S70 is disordered. The 124-residue stretch at V60–F183 folds into the C2 domain. Positions P61–S70 are enriched in low complexity. Ca(2+) is bound by residues D97, D103, D153, D155, and D161. Positions P332–S875 constitute a PLA2c domain. The Nucleophile role is filled by S420. Catalysis depends on D708, which acts as the Proton acceptor. S808 is modified (phosphoserine). A required for localization at membrane structures region spans residues E865–S875.

It depends on Ca(2+) as a cofactor. In terms of tissue distribution, predominantly expressed in brain, heart, skeletal muscle, testis and thyroid. Expressed in neurons but not astrocytes or microglia. Expressed at lower level in stomach.

The protein localises to the cytoplasm. It is found in the cytosol. The protein resides in the early endosome membrane. Its subcellular location is the lysosome membrane. It localises to the cell membrane. It carries out the reaction a 1,2-diacyl-sn-glycero-3-phosphoethanolamine + a 1,2-diacyl-sn-glycero-3-phosphocholine = an N-acyl-1,2-diacyl-sn-glycero-3-phosphoethanolamine + a 2-acyl-sn-glycero-3-phosphocholine + H(+). The catalysed reaction is 1-hexadecanoyl-2-octadecanoyl-sn-glycero-3-phosphocholine + 1,2-di-(9Z-octadecenoyl)-sn-glycero-3-phosphoethanolamine = 2-octadecanoyl-sn-glycero-3-phosphocholine + N-hexadecanoyl-1,2-di-(9Z-octadecenoyl)-sn-glycero-3-phosphoethanolamine + H(+). The enzyme catalyses 1-octadecanoyl-2-hexadecanoyl-sn-glycero-3-phosphocholine + 1,2-di-(9Z-octadecenoyl)-sn-glycero-3-phosphoethanolamine = N-octadecanoyl-1,2-di-(9Z-octadecenoyl)-sn-glycero-3-phosphoethanolamine + 2-hexadecanoyl-sn-glycero-3-phosphocholine + H(+). It catalyses the reaction 1,2-di-(9Z-octadecenoyl)-sn-glycero-3-phosphoethanolamine + 1,2-dihexadecanoyl-sn-glycero-3-phosphocholine = N-hexadecanoyl-1,2-di-(9Z-octadecenoyl)-sn-glycero-3-phosphoethanolamine + 2-hexadecanoyl-sn-glycero-3-phosphocholine + H(+). It carries out the reaction 1,2-di-(5Z,8Z,11Z,14Z-eicosatetraenoyl)-sn-glycero-3-phosphocholine + 1,2-di-(9Z-octadecenoyl)-sn-glycero-3-phosphoethanolamine = N-(5Z,8Z,11Z,14Z-eicosatetraenoyl)-1,2-di-(9Z-octadecenoyl)-sn-glycero-3-phosphoethanolamine + 2-(5Z,8Z,11Z,14Z)-eicosatetraenoyl-sn-glycero-3-phosphocholine + H(+). The catalysed reaction is 2 1,2-di-(9Z-octadecenoyl)-sn-glycero-3-phosphoethanolamine = N,1,2-tri-(9Z-octadecenoyl)-sn-glycero-3-phosphoethanolamine + 2-(9Z-octadecenoyl)-sn-glycero-3-phosphoethanolamine + H(+). The enzyme catalyses a 1,2-diacyl-sn-glycero-3-phosphocholine + H2O = a 1-acyl-sn-glycero-3-phosphocholine + a fatty acid + H(+). It catalyses the reaction 1-(1Z-octadecenyl)-2-(9Z-octadecenoyl)-sn-glycero-3-phosphoethanolamine + 1,2-dihexadecanoyl-sn-glycero-3-phosphocholine = 1-O-(1Z-octadecenoyl)-2-(9Z-octadecenoyl)-sn-glycero-3-phospho-N-hexadecanoyl-ethanolamine + 2-hexadecanoyl-sn-glycero-3-phosphocholine + H(+). It carries out the reaction 1-hexadecanoyl-2-(5Z,8Z,11Z,14Z-eicosatetraenoyl)-sn-glycero-3-phosphocholine + H2O = 1-hexadecanoyl-sn-glycero-3-phosphocholine + (5Z,8Z,11Z,14Z)-eicosatetraenoate + H(+). The catalysed reaction is 1-hexadecanoyl-sn-glycero-3-phosphocholine + H2O = sn-glycerol 3-phosphocholine + hexadecanoate + H(+). Its activity is regulated as follows. Stimulated by cytosolic Ca(2+). Stimulated by anionic phospholipids such as phosphatidylserine. Calcium-dependent N-acyltransferase involved in the biosynthesis of N-acyl ethanolamines (NAEs) in the brain. Transfers the sn-1 fatty acyl chain of phosphatidylcholine (fatty acyl donor) to the amine group of phosphatidylethanolamine (fatty acyl acceptor) to generate N-acyl phosphatidylethanolamine (NAPE). Similarly can use plasmenylethanolamine as a fatty acyl acceptor to form N-acyl plasmenylethanolamine (N-Acyl-PlsEt). Both NAPE and N-Acyl-PlsEt can serve as precursors of bioactive NAEs like N-arachidonoyl phosphatidylethanolamine also called anandamide. Has weak phospholipase A2 and lysophospholipase activities. Regulates intracellular membrane trafficking that requires modulation of membrane curvature as it occurs by enrichment in lysophospholipids. Promotes tubule formation involved in clathrin-independent endocytotic trafficking and cargo recycling. This is Cytosolic phospholipase A2 epsilon (Pla2g4e) from Mus musculus (Mouse).